Consider the following 337-residue polypeptide: Meiotic driver wtf4 (337 aa).

Over residues 1–29 (MKNKDYPLRSSMDELSTKNDNEIDLEKGP) the composition is skewed to basic and acidic residues. The interval 1–40 (MKNKDYPLRSSMDELSTKNDNEIDLEKGPLPEYNSEDEST) is disordered. 6 consecutive transmembrane segments (helical) span residues 89–109 (LLIS…CVNP), 119–139 (AFFV…FCFF), 149–169 (CIKV…VGLY), 176–196 (VVII…RSKF), 210–230 (CSIS…FWTL), and 234–254 (FSGL…TKGL).

This sequence belongs to the WTF family. As to quaternary structure, homomer. Forms protein aggregates. The two isoforms can interact with each other and with themselves. High sequence similarity is required for their interaction.

It is found in the spore membrane. The protein localises to the vacuole membrane. It localises to the ascus epiplasm. The protein resides in the cytoplasm. Its subcellular location is the endoplasmic reticulum membrane. Promotes unequal transmission of alleles from the parental zygote to progeny spores by acting as poison/antidote system where the poison and antidote proteins are produced from the same locus; the poison component is trans-acting and targets all spores within an ascus whereas the antidote component is spore-specific, leading to poisoning of all progeny that do not inherit the allele. Its function is as follows. Localizes isoform 2 to the vacuole thereby facilitating its degradation. In terms of biological role, forms toxic aggregates that disrupt spore maturation. The polypeptide is Meiotic driver wtf4 (Schizosaccharomyces kambucha (Fission yeast)).